The sequence spans 1208 residues: Defective chorion protein, FC125 isoform (1208 aa).

Positions Met1–Gly19 are cleaved as a signal peptide. Disordered regions lie at residues Val23 to Asn60, Ala184 to Pro212, and Pro268 to Tyr294. Polar residues predominate over residues Ala32–Asp41. Positions Pro268–Ala280 are enriched in low complexity. 5 repeat units span residues Gln493–Gln518, Gln519–Gln544, Gln545–Gln570, Gln571–Gln596, and Gln597–Gln622. The interval Gln493 to Gln788 is 12 X 26 AA approximate tandem repeats, Glu, Met-rich. A 6; approximate repeat occupies Gln623–Gln652. A 7; approximate repeat occupies Gln653 to Gln680. The stretch at Gln681 to Glu696 is one 8; approximate repeat. The 9; approximate repeat unit spans residues Asp697–Gln720. A 10; approximate repeat occupies Gln721 to Glu733. An 11; approximate repeat occupies Asn734–Gln758. One copy of the 12; approximate repeat lies at Gln759–Gln788. The span at Glu828 to Val839 shows a compositional bias: acidic residues. Disordered stretches follow at residues Glu828–Ala875, Arg944–Phe1010, and Val1114–Asp1208. Residues Ser957 to Gln977 are compositionally biased toward polar residues. 2 stretches are compositionally biased toward acidic residues: residues Pro1163–Glu1178 and Asn1194–Asp1208.

The protein resides in the secreted. Its function is as follows. Required for proper assembly of the eggshell. This is Defective chorion protein, FC125 isoform from Drosophila melanogaster (Fruit fly).